The chain runs to 376 residues: UPF0284 protein glr4139 (376 aa).

Belongs to the UPF0284 family.

This Gloeobacter violaceus (strain ATCC 29082 / PCC 7421) protein is UPF0284 protein glr4139.